Reading from the N-terminus, the 587-residue chain is 5-aminolevulinate synthase, erythroid-specific, mitochondrial (587 aa).

A mitochondrion-targeting transit peptide spans 1 to 49; that stretch reads MVAAAMLLRSCPVLSKGPTGLLGKVAKTYQFLFGIGRCPILATQGPTCS. A succinyl-CoA-binding site is contributed by Arg163. Cys258 and Phe259 together coordinate pyridoxal 5'-phosphate. 2 residues coordinate succinyl-CoA: Ser280 and Lys299. Residues Ser332, His360, and Thr388 each coordinate pyridoxal 5'-phosphate. Lys391 is a catalytic residue. Lys391 carries the N6-(pyridoxal phosphate)lysine modification. Pyridoxal 5'-phosphate contacts are provided by Thr420 and Thr421. Thr508 contacts succinyl-CoA.

It belongs to the class-II pyridoxal-phosphate-dependent aminotransferase family. In terms of assembly, homodimer. Interacts with SUCLA2. Pyridoxal 5'-phosphate is required as a cofactor. As to expression, erythroid-specific.

It is found in the mitochondrion inner membrane. It catalyses the reaction succinyl-CoA + glycine + H(+) = 5-aminolevulinate + CO2 + CoA. The protein operates within porphyrin-containing compound metabolism; protoporphyrin-IX biosynthesis; 5-aminolevulinate from glycine: step 1/1. Its function is as follows. Catalyzes the pyridoxal 5'-phosphate (PLP)-dependent condensation of succinyl-CoA and glycine to form aminolevulinic acid (ALA), with CoA and CO2 as by-products. Contributes significantly to heme formation during erythropoiesis. This chain is 5-aminolevulinate synthase, erythroid-specific, mitochondrial (Alas2), found in Rattus norvegicus (Rat).